The primary structure comprises 307 residues: MLQRTLAKSISVTGVGLHSGERVALTLHPAPENSGISFRRTDLDGEMGEQIKLTPYLINDTRLSSTIVTDKGVRVGTIEHIMSALSAYGIDNALIELNAPEIPIMDGSSLPFIYLLQDAGVVDQKAQKRFLKILKPVEIKEAGKWVRFTPYDGFKVTLTIEFDHPAFNRSSPTFEIDFAGKSYIDEIARARTFGFMHEVEMMRAHNLGLGGNLNNAIVIDDTDVLNPEGLRYPDEFVRHKILDAIGDLYIVGHPIVGAFEGYKSGHAINNALLRAVLADETAYDRVEFADSDDLPDAFHELNIRNCG.

Zn(2+) is bound by residues His-80, His-239, and Asp-243. Catalysis depends on His-266, which acts as the Proton donor.

It belongs to the LpxC family. The cofactor is Zn(2+).

The catalysed reaction is a UDP-3-O-[(3R)-3-hydroxyacyl]-N-acetyl-alpha-D-glucosamine + H2O = a UDP-3-O-[(3R)-3-hydroxyacyl]-alpha-D-glucosamine + acetate. It functions in the pathway glycolipid biosynthesis; lipid IV(A) biosynthesis; lipid IV(A) from (3R)-3-hydroxytetradecanoyl-[acyl-carrier-protein] and UDP-N-acetyl-alpha-D-glucosamine: step 2/6. In terms of biological role, catalyzes the hydrolysis of UDP-3-O-myristoyl-N-acetylglucosamine to form UDP-3-O-myristoylglucosamine and acetate, the committed step in lipid A biosynthesis. This Neisseria meningitidis serogroup C / serotype 2a (strain ATCC 700532 / DSM 15464 / FAM18) protein is UDP-3-O-acyl-N-acetylglucosamine deacetylase.